A 353-amino-acid chain; its full sequence is Photosystem II D2 protein (353 aa).

Thr-2 carries the N-acetylthreonine modification. A Phosphothreonine modification is found at Thr-2. The chain crosses the membrane as a helical span at residues 41–61 (CAYFALGGWFTGTTFVTSWYT). His-118 is a chlorophyll a binding site. Residues 125-141 (GFMLRQFELARSVQLRP) traverse the membrane as a helical segment. The pheophytin a site is built by Gln-130 and Asn-143. A helical transmembrane segment spans residues 153 to 166 (VFVSVFLIYPLGQS). His-198 serves as a coordination point for chlorophyll a. Residues 208 to 228 (AALLCAIHGATVENTLFEDGD) traverse the membrane as a helical segment. Residues His-215 and Phe-262 each coordinate a plastoquinone. His-215 is a Fe cation binding site. Fe cation is bound at residue His-269. Residues 279–295 (GLWMSALGVVGLALNLR) traverse the membrane as a helical segment.

It belongs to the reaction center PufL/M/PsbA/D family. As to quaternary structure, PSII is composed of 1 copy each of membrane proteins PsbA, PsbB, PsbC, PsbD, PsbE, PsbF, PsbH, PsbI, PsbJ, PsbK, PsbL, PsbM, PsbT, PsbX, PsbY, PsbZ, Psb30/Ycf12, at least 3 peripheral proteins of the oxygen-evolving complex and a large number of cofactors. It forms dimeric complexes. The D1/D2 heterodimer binds P680, chlorophylls that are the primary electron donor of PSII, and subsequent electron acceptors. It shares a non-heme iron and each subunit binds pheophytin, quinone, additional chlorophylls, carotenoids and lipids. There is also a Cl(-1) ion associated with D1 and D2, which is required for oxygen evolution. The PSII complex binds additional chlorophylls, carotenoids and specific lipids. serves as cofactor.

Its subcellular location is the plastid. The protein localises to the chloroplast thylakoid membrane. The enzyme catalyses 2 a plastoquinone + 4 hnu + 2 H2O = 2 a plastoquinol + O2. Its function is as follows. Photosystem II (PSII) is a light-driven water:plastoquinone oxidoreductase that uses light energy to abstract electrons from H(2)O, generating O(2) and a proton gradient subsequently used for ATP formation. It consists of a core antenna complex that captures photons, and an electron transfer chain that converts photonic excitation into a charge separation. The D1/D2 (PsbA/PsbD) reaction center heterodimer binds P680, the primary electron donor of PSII as well as several subsequent electron acceptors. D2 is needed for assembly of a stable PSII complex. The sequence is that of Photosystem II D2 protein from Nuphar advena (Common spatterdock).